The following is a 113-amino-acid chain: Large ribosomal subunit protein uL24 (113 aa).

It belongs to the universal ribosomal protein uL24 family. In terms of assembly, part of the 50S ribosomal subunit.

In terms of biological role, one of two assembly initiator proteins, it binds directly to the 5'-end of the 23S rRNA, where it nucleates assembly of the 50S subunit. One of the proteins that surrounds the polypeptide exit tunnel on the outside of the subunit. In Fusobacterium nucleatum subsp. nucleatum (strain ATCC 25586 / DSM 15643 / BCRC 10681 / CIP 101130 / JCM 8532 / KCTC 2640 / LMG 13131 / VPI 4355), this protein is Large ribosomal subunit protein uL24 (rplX).